Reading from the N-terminus, the 480-residue chain is Adenosylhomocysteinase (480 aa).

3 residues coordinate substrate: Thr63, Asp142, and Glu203. Residue 204–206 (TTT) coordinates NAD(+). Residues Lys233 and Asp237 each contribute to the substrate site. NAD(+) is bound by residues Asn238, 267–272 (GYGDVG), Glu290, Asn325, 346–348 (IGH), and Asn394.

The protein belongs to the adenosylhomocysteinase family. It depends on NAD(+) as a cofactor.

Its subcellular location is the cytoplasm. It carries out the reaction S-adenosyl-L-homocysteine + H2O = L-homocysteine + adenosine. It participates in amino-acid biosynthesis; L-homocysteine biosynthesis; L-homocysteine from S-adenosyl-L-homocysteine: step 1/1. Its function is as follows. May play a key role in the regulation of the intracellular concentration of adenosylhomocysteine. This Xanthomonas campestris pv. campestris (strain 8004) protein is Adenosylhomocysteinase.